A 130-amino-acid chain; its full sequence is Small ribosomal subunit protein uS9 (130 aa).

The protein belongs to the universal ribosomal protein uS9 family.

The chain is Small ribosomal subunit protein uS9 from Shewanella pealeana (strain ATCC 700345 / ANG-SQ1).